The primary structure comprises 159 residues: 3-hydroxyacyl-[acyl-carrier-protein] dehydratase FabZ (159 aa).

Residue histidine 59 is part of the active site.

It belongs to the thioester dehydratase family. FabZ subfamily.

The protein localises to the cytoplasm. It carries out the reaction a (3R)-hydroxyacyl-[ACP] = a (2E)-enoyl-[ACP] + H2O. Involved in unsaturated fatty acids biosynthesis. Catalyzes the dehydration of short chain beta-hydroxyacyl-ACPs and long chain saturated and unsaturated beta-hydroxyacyl-ACPs. This chain is 3-hydroxyacyl-[acyl-carrier-protein] dehydratase FabZ, found in Caulobacter vibrioides (strain ATCC 19089 / CIP 103742 / CB 15) (Caulobacter crescentus).